We begin with the raw amino-acid sequence, 159 residues long: Fatty acid-binding protein homolog 1 (159 aa).

The signal sequence occupies residues 1 to 17 (MCAKIALLLVLVGAASA).

This sequence belongs to the calycin superfamily. Fatty-acid binding protein (FABP) family. First detected in hypodermal precursor cells at the time of gastrulation. From the two-fold stage through to three-fold stages, expression is localized exclusively to hyp-7 but disappears in newly hatched L1s and subsequent developmental stages. Expression from L1 to adult stages is found in a single neuron in the ventral cord with a process into the nerve ring.

It localises to the secreted. May play a role in sequestering potentially toxic fatty acids and their peroxidation products, or it may be involved in the maintenance of the impermeable lipid layer of the eggshell. This chain is Fatty acid-binding protein homolog 1 (lbp-1), found in Caenorhabditis elegans.